The sequence spans 665 residues: Probable potassium transport system protein Kup (665 aa).

The segment covering 1-18 (MASEAPHASAPDCAPASS) has biased composition (low complexity). The interval 1–31 (MASEAPHASAPDCAPASSDIPQQDGGSTNGH) is disordered. Transmembrane regions (helical) follow at residues 40 to 60 (FFAL…TSPL), 83 to 103 (VVSL…VVFI), 131 to 151 (LVFV…VITP), 171 to 191 (GVTN…LFFI), 202 to 222 (LFGP…LMNL), 245 to 265 (GLTG…VEAL), 281 to 301 (WLFF…AFAL), 332 to 352 (LVLL…TGAF), 380 to 400 (IFVP…MFTF), 409 to 429 (AYGL…FIVM), 435 to 455 (WSMP…ITFL), and 462 to 482 (FFSG…IMAT).

Belongs to the HAK/KUP transporter (TC 2.A.72) family.

Its subcellular location is the cell inner membrane. The catalysed reaction is K(+)(in) + H(+)(in) = K(+)(out) + H(+)(out). Transport of potassium into the cell. Likely operates as a K(+):H(+) symporter. The protein is Probable potassium transport system protein Kup of Caulobacter vibrioides (strain ATCC 19089 / CIP 103742 / CB 15) (Caulobacter crescentus).